We begin with the raw amino-acid sequence, 565 residues long: Liver carboxylesterase 1 (565 aa).

Residues 1–18 (MWLCALALASLAACTAWG) form the signal peptide. N79 carries N-linked (GlcNAc...) asparagine glycosylation. The cysteines at positions 87 and 116 are disulfide-linked. The active-site Acyl-ester intermediate is the S221. A disulfide bridge connects residues C273 and C284. The Charge relay system role is filled by E353. N389 carries N-linked (GlcNAc...) asparagine glycosylation. H467 acts as the Charge relay system in catalysis. Position 565 (L565) is a short sequence motif, prevents secretion from ER.

Belongs to the type-B carboxylesterase/lipase family. Monomer.

It localises to the endoplasmic reticulum lumen. It catalyses the reaction a carboxylic ester + H2O = an alcohol + a carboxylate + H(+). Involved in the detoxification of xenobiotics and in the activation of ester and amide prodrugs. The polypeptide is Liver carboxylesterase 1 (Oryctolagus cuniculus (Rabbit)).